Reading from the N-terminus, the 214-residue chain is Large ribosomal subunit protein uL3 (214 aa).

The disordered stretch occupies residues 133–153 (GRATHGNSRSHNVPGSIGMAQ). Q153 bears the N5-methylglutamine mark.

Belongs to the universal ribosomal protein uL3 family. As to quaternary structure, part of the 50S ribosomal subunit. Forms a cluster with proteins L14 and L19. Post-translationally, methylated by PrmB.

Its function is as follows. One of the primary rRNA binding proteins, it binds directly near the 3'-end of the 23S rRNA, where it nucleates assembly of the 50S subunit. The protein is Large ribosomal subunit protein uL3 of Cupriavidus metallidurans (strain ATCC 43123 / DSM 2839 / NBRC 102507 / CH34) (Ralstonia metallidurans).